The primary structure comprises 20 residues: Pregnancy-associated glycoprotein 61C (20 aa).

It belongs to the peptidase A1 family. Post-translationally, N-glycosylated. In terms of tissue distribution, expressed in chorionic epithelium (trophectoderm).

It localises to the secreted. The protein resides in the extracellular space. The polypeptide is Pregnancy-associated glycoprotein 61C (Bubalus bubalis (Domestic water buffalo)).